We begin with the raw amino-acid sequence, 1104 residues long: MARRGKKPVVRTLEDLTLDSGYGGAADSVRSSNLSLCCSDSHPASPYGGSCWPPLADSMHSRHNSFDTVNTALVEDSEGLDCAGQHCSRLLPDLDEVPWTLQELEALLLRSRDPRAGPAVPGGLPKDALAKLSTLVSRALVRIAKEAQRLSLRFAKCTKYEIQSAMEIVLSWGLAAHCTAAALAALSLYNMSSAGGDRLGRGKSARCGLTFSVGRVYRWMVDSRVALRIHEHAAIYLTACMESLFRDIYSRVVASGVPRSCSGPGSGSGSGPGPSSGPGAAPAADKEREAPGGGAASGGACSAASSASGGSSCCAPPAAAAAAVPPAAAANHHHHHHHALHEAPKFTVETLEHTVNNDSEIWGLLQPYQHLICGKNASGVLCLPDSLNLHRDPQRSNKPGELPMFSQSELRTIEQSLLATRVGSIAELSDLVSRAMHHLQPLNAKHHGNGTPLHHKQGALYWEPEALYTLCYFMHCPQMEWENPNVEPSKVNLQVERPFLVLPPLMEWIRVAVAHAGHRRSFSMDSDDVRQAARLLLPGVDCEPRQLRADDCFCASRKLDAVAIEAKFKQDLGFRMLNCGRTDLVKQAVSLLGPDGINTMSEQGMTPLMYACVRGDEAMVQMLLDAGADLNVEVVSTPHKYPSVHPETRHWTALTFAVLHGHIPVVQLLLDAGAKVEGSVEHGEENYSETPLQLAAAVGNFELVSLLLERGADPLIGTMYRNGISTTPQGDMNSFSQAAAHGHRNVFRKLLAQPEKEKSDILSLEEILAEGTDLAETAPPPLCASRNSKAKLRALREAMYHSAEHGYVDVTIDIRSIGVPWTLHTWLESLRIAFQQHRRPLIQCLLKEFKTIQEEEYTEELVTQGLPLMFEILKASKNEVISQQLCVIFTHCYGPYPIPKLTEIKRKQTSRLDPHFLNNKEMSDVTFLVEGRPFYAHKVLLFTASPRFKALLSSKPTNDGTCIEIGYVKYSIFQLVMQYLYYGGPESLLIKNNEIMELLSAAKFFQLEALQRHCEIICAKSINTDNCVDIYNHAKFLGVTELSAYCEGYFLKNMMVLIENEAFKQLLYDKNGEGTGQDVLQDLQRTLAIRIQSIHLSSSKGSVV.

A helical transmembrane segment spans residues 168–188; it reads IVLSWGLAAHCTAAALAALSL. The disordered stretch occupies residues 260–301; it reads SCSGPGSGSGSGPGPSSGPGAAPAADKEREAPGGGAASGGAC. Residues 264 to 276 show a composition bias toward gly residues; it reads PGSGSGSGPGPSS. ANK repeat units follow at residues 603–632, 649–678, 687–716, 730–759, and 825–854; these read QGMTPLMYACVRGDEAMVQMLLDAGADLNV, RHWTALTFAVLHGHIPVVQLLLDAGAKVEG, YSETPLQLAAAVGNFELVSLLLERGADPLI, GDMNSFSQAAAHGHRNVFRKLLAQPEKEKS, and TWLESLRIAFQQHRRPLIQCLLKEFKTIQE. A BTB domain is found at 923-989; sequence SDVTFLVEGR…LYYGGPESLL (67 aa).

Its subcellular location is the membrane. This is Ankyrin repeat- and BTB/POZ domain-containing protein 3 from Homo sapiens (Human).